Reading from the N-terminus, the 253-residue chain is Ribosomal RNA small subunit methyltransferase G (253 aa).

S-adenosyl-L-methionine-binding positions include G84, F89, 135-136, and R154; that span reads AE. The tract at residues 228–253 is disordered; it reads TPAKYPRREGVPTHQPLFWKAKEQSR.

It belongs to the methyltransferase superfamily. RNA methyltransferase RsmG family.

Its subcellular location is the cytoplasm. Functionally, specifically methylates the N7 position of a guanine in 16S rRNA. The polypeptide is Ribosomal RNA small subunit methyltransferase G (Deinococcus radiodurans (strain ATCC 13939 / DSM 20539 / JCM 16871 / CCUG 27074 / LMG 4051 / NBRC 15346 / NCIMB 9279 / VKM B-1422 / R1)).